The chain runs to 158 residues: GAF domain-containing protein A (158 aa).

The GAF domain occupies 32-158 (NQIANLANVT…LTQILKLLDN (127 aa)).

This sequence belongs to the free Met sulfoxide reductase family.

The protein is GAF domain-containing protein A (gafA) of Dictyostelium discoideum (Social amoeba).